Consider the following 297-residue polypeptide: Hydroxysqualene synthase (297 aa).

It belongs to the phytoene/squalene synthase family. HpnC subfamily.

The catalysed reaction is presqualene diphosphate + H2O = hydroxysqualene + diphosphate. Its pathway is secondary metabolite biosynthesis; hopanoid biosynthesis. Its function is as follows. Involved in the biosynthesis of the hopanoid precursor squalene (SQ) from farnesyl diphosphate (FPP). Catalyzes the second step, the conversion of presqualene diphosphate (PSPP) to hydroxysqualene (HSQ). The sequence is that of Hydroxysqualene synthase from Zymomonas mobilis subsp. mobilis (strain ATCC 31821 / ZM4 / CP4).